The following is a 393-amino-acid chain: Sulfate adenylyltransferase (393 aa).

Belongs to the sulfate adenylyltransferase family.

The enzyme catalyses sulfate + ATP + H(+) = adenosine 5'-phosphosulfate + diphosphate. The protein operates within sulfur metabolism; hydrogen sulfide biosynthesis; sulfite from sulfate: step 1/3. The protein is Sulfate adenylyltransferase of Synechococcus sp. (strain JA-3-3Ab) (Cyanobacteria bacterium Yellowstone A-Prime).